A 250-amino-acid chain; its full sequence is Probable transcriptional regulatory protein Emin_1151 (250 aa).

It belongs to the TACO1 family.

The protein resides in the cytoplasm. The chain is Probable transcriptional regulatory protein Emin_1151 from Elusimicrobium minutum (strain Pei191).